The primary structure comprises 852 residues: Cell surface glycoprotein (852 aa).

An N-terminal signal peptide occupies residues 1-34 (MTDTTGKLRAVLLTALMVGSVIGAGVAFTGGAAA). The N-linked (GalNAc...) (glycosaminoglycan) asparagine glycan is linked to Asn36. A disordered region spans residues 84–131 (KLDNEKEVSPATLSRTGGSDEGVPLQMPIPEDQSTGSYDSNGPDNDEA). Over residues 115-126 (DQSTGSYDSNGP) the composition is skewed to polar residues. Residues Asn339, Asn398, Asn438, Asn513, Asn643, Asn727, Asn751, and Asn787 are each glycosylated (N-linked (Glc...) asparagine). The segment at 772–828 (ELEEPDQTTVDQPENNQTMTTTMTETTTETTTEMTTTQENTTENGSEGTSDGESGGS) is disordered. The span at 785-823 (ENNQTMTTTMTETTTETTTEMTTTQENTTENGSEGTSDG) shows a compositional bias: low complexity. O-linked (Gal...) threonine glycans are attached at residues Thr789, Thr791, Thr792, Thr793, Thr795, Thr797, Thr798, Thr799, Thr801, Thr802, Thr803, Thr806, Thr807, and Thr808. N-linked (Glc...) asparagine glycosylation occurs at Asn811. O-linked (Gal...) threonine glycans are attached at residues Thr812 and Thr813. Residue Asn815 is glycosylated (N-linked (Glc...) asparagine). The chain crosses the membrane as a helical span at residues 829–849 (IPGFGVGVALVAVLGAALLAL). Residues 830 to 832 (PGF) carry the PGF sorting signal motif.

This sequence belongs to the halobacterial S-layer protein family. N-linked glycan at Asn-36 consists of a glycosaminoglycan chain, constructed by a repeating sulfated pentasaccharide block composed of GlcNAc, GalNAc, Gal, GalA, 3-O-methyl-GalA, and sulfate in the molar ratio of 1:1:1:1:1:2; the other N-linked glycans contain Glc, GlcA and IdoA. Post-translationally, O-linked glycans consist of Glc-Gal disaccharides. In terms of processing, the C-terminus (residues 770-778) is lipidated with diphytanylglyceryl phosphate. Cleaved by the archaeosortase ArtA at the C-terminus, with removal of a short hydrophobic segment.

The protein localises to the secreted. It localises to the cell wall. Its subcellular location is the S-layer. It is found in the cell membrane. Its function is as follows. S-layer protein. The S-layer is a paracrystalline mono-layered assembly of proteins which coat the surface of the cell. In Halobacterium salinarum (strain ATCC 29341 / DSM 671 / R1), this protein is Cell surface glycoprotein (csg).